The following is a 138-amino-acid chain: ATP synthase epsilon chain 1 (138 aa).

The protein belongs to the ATPase epsilon chain family. F-type ATPases have 2 components, CF(1) - the catalytic core - and CF(0) - the membrane proton channel. CF(1) has five subunits: alpha(3), beta(3), gamma(1), delta(1), epsilon(1). CF(0) has three main subunits: a, b and c.

It localises to the cell inner membrane. Produces ATP from ADP in the presence of a proton gradient across the membrane. This chain is ATP synthase epsilon chain 1, found in Syntrophotalea carbinolica (strain DSM 2380 / NBRC 103641 / GraBd1) (Pelobacter carbinolicus).